A 404-amino-acid chain; its full sequence is MNNNAQNKRSLDDSNGNDTKRPKQEDPKYILPKQVNTYPATLPERKKNIEYILNILTKKQPNITNPKLKAIDIEYEIAKKSTNATYKTVFRQEVFKLTKPTKSPSQLSPQQEHLKKLDQEAKELKILKEMVVSRKTLIAFGYIMEPPESIPNEKITRICNRCGTEFRLDQQLQPIVCEFHHGKKQRGKYICCMSNVDGQPCSKAKNHVYLLNTPEEKQALLPYQFTKELFTTTSTKSKSRVLGIDCEMGFTTKGFELMRITAIDYFTSKTVLDIFIKPIGEIVDFNTRYSGIHELTDDFLSWEQSMEKLGEIMDSETILIGHGLENDMNAMRLIHENIIDTSILFPNKWKTGPTRRWSLKDLAFEFLSRRIQTGEHDSCEDSIAAIDIVKYFVKKRLQSIGSSS.

The span at 1 to 17 (MNNNAQNKRSLDDSNGN) shows a compositional bias: polar residues. The tract at residues 1-29 (MNNNAQNKRSLDDSNGNDTKRPKQEDPKY) is disordered. A compositionally biased stretch (basic and acidic residues) spans 18 to 28 (DTKRPKQEDPK). Residues 241-389 (VLGIDCEMGF…EDSIAAIDIV (149 aa)) enclose the Exonuclease domain.

It belongs to the REXO1/REXO3 family.

Its subcellular location is the cytoplasm. It localises to the nucleus. Its function is as follows. 3' to 5' exoribonuclease required for proper 3' end maturation of MRP RNA and of the U5L snRNA. This Candida albicans (strain SC5314 / ATCC MYA-2876) (Yeast) protein is RNA exonuclease 3 (REX3).